The sequence spans 521 residues: BAR/IMD domain-containing adapter protein 2 (521 aa).

The IMD domain maps to Met1 to Ser250. A coiled-coil region spans residues Asp132 to Asn153. 4 positions are modified to phosphoserine: Ser262, Ser324, Ser326, and Ser337. The interval Val299–Ala370 is disordered. The segment covering Gln321 to Ser335 has biased composition (low complexity). Phosphothreonine is present on Thr341. The residue at position 347 (Ser347) is a Phosphoserine. Polar residues predominate over residues Thr349–Met368. Thr361 carries the post-translational modification Phosphothreonine. Phosphoserine is present on residues Ser367, Ser385, Ser396, and Ser455. Residues Asn375–Ser438 enclose the SH3 domain. The tract at residues His445 to Pro480 is disordered. A compositionally biased stretch (polar residues) spans Ser447–Asn458.

In terms of assembly, homodimer. Interacts with CDC42 and RAC1 that have been activated by GTP binding. Interacts with ATN1, ADGRB1, DIAPH1, EPS8, SHANK1, SHANK2, SHANK3, TIAM1, WASF1 and WASF2. Interacts with ENAH after recruitment of CDC42. Post-translationally, phosphorylated on tyrosine residues by INSR in response to insulin treatment.

It is found in the cytoplasm. Its subcellular location is the membrane. The protein localises to the cell projection. The protein resides in the filopodium. It localises to the ruffle. It is found in the cytoskeleton. Adapter protein that links membrane-bound small G-proteins to cytoplasmic effector proteins. Necessary for CDC42-mediated reorganization of the actin cytoskeleton and for RAC1-mediated membrane ruffling. Involved in the regulation of the actin cytoskeleton by WASF family members and the Arp2/3 complex. Plays a role in neurite growth. Acts syngeristically with ENAH to promote filipodia formation. Plays a role in the reorganization of the actin cytoskeleton in response to bacterial infection. Participates in actin bundling when associated with EPS8, promoting filopodial protrusions. In Cricetulus griseus (Chinese hamster), this protein is BAR/IMD domain-containing adapter protein 2 (BAIAP2).